The primary structure comprises 979 residues: Translation initiation factor IF-2 (979 aa).

The interval 68–392 (VKQKQGTPAS…SRAAQDAMEL (325 aa)) is disordered. Basic and acidic residues-rich tracts occupy residues 102-179 (QDMR…KPEE), 217-229 (EMEK…EVFR), and 260-273 (TKED…DADG). A compositionally biased stretch (polar residues) spans 309 to 326 (PSGNKNNNRPAQQQSNAS). Positions 347-356 (DVQRQVKETL) are enriched in basic and acidic residues. A tr-type G domain is found at 478–646 (ARPPIVTVMG…KVLLEADILE (169 aa)). A G1 region spans residues 487–494 (GHVDHGKT). 487–494 (GHVDHGKT) provides a ligand contact to GTP. Positions 512–516 (GITQH) are G2. The G3 stretch occupies residues 534–537 (DTPG). Residues 534–538 (DTPGH) and 588–591 (NKID) contribute to the GTP site. The interval 588–591 (NKID) is G4. The tract at residues 624 to 626 (SAK) is G5.

It belongs to the TRAFAC class translation factor GTPase superfamily. Classic translation factor GTPase family. IF-2 subfamily.

Its subcellular location is the cytoplasm. In terms of biological role, one of the essential components for the initiation of protein synthesis. Protects formylmethionyl-tRNA from spontaneous hydrolysis and promotes its binding to the 30S ribosomal subunits. Also involved in the hydrolysis of GTP during the formation of the 70S ribosomal complex. The sequence is that of Translation initiation factor IF-2 from Porphyromonas gingivalis (strain ATCC 33277 / DSM 20709 / CIP 103683 / JCM 12257 / NCTC 11834 / 2561).